The sequence spans 201 residues: 8-oxoguanine DNA glycosylase/AP lyase (201 aa).

Catalysis depends on residues Lys126 and Asp144.

The protein belongs to the type-2 OGG1 family.

It carries out the reaction 2'-deoxyribonucleotide-(2'-deoxyribose 5'-phosphate)-2'-deoxyribonucleotide-DNA = a 3'-end 2'-deoxyribonucleotide-(2,3-dehydro-2,3-deoxyribose 5'-phosphate)-DNA + a 5'-end 5'-phospho-2'-deoxyribonucleoside-DNA + H(+). Functionally, catalyzes the excision of an oxidatively damaged form of guanine (7,8-dihydro-8-oxoguanine = 8-oxoG) from DNA. Also cleaves the DNA backbone at apurinic/apyrimidinic sites (AP sites). This Metallosphaera sedula (strain ATCC 51363 / DSM 5348 / JCM 9185 / NBRC 15509 / TH2) protein is 8-oxoguanine DNA glycosylase/AP lyase.